The sequence spans 240 residues: Glutathione S-transferase U9 (240 aa).

The GST N-terminal domain occupies 7-86 (NKVILHGSFA…YIDETWSNGP (80 aa)). Glutathione is bound by residues 17 to 18 (SP), 43 to 44 (NK), 57 to 58 (KI), and 70 to 71 (ES). In terms of domain architecture, GST C-terminal spans 92–226 (DPYRRSKVRF…EQILEILRAF (135 aa)). Thr-161 carries the phosphothreonine modification.

Belongs to the GST superfamily. Tau family.

The protein resides in the cytoplasm. The protein localises to the cytosol. It carries out the reaction RX + glutathione = an S-substituted glutathione + a halide anion + H(+). May be involved in the conjugation of reduced glutathione to a wide number of exogenous and endogenous hydrophobic electrophiles and have a detoxification role against certain herbicides. The chain is Glutathione S-transferase U9 (GSTU9) from Arabidopsis thaliana (Mouse-ear cress).